Reading from the N-terminus, the 51-residue chain is Ribosome biogenesis protein Nop10 (51 aa).

This sequence belongs to the NOP10 family.

In terms of biological role, involved in ribosome biogenesis; more specifically in 18S rRNA pseudouridylation and in cleavage of pre-rRNA. The sequence is that of Ribosome biogenesis protein Nop10 from Methanococcus maripaludis (strain C6 / ATCC BAA-1332).